The following is a 1014-amino-acid chain: Latrophilin-like protein 1 (1014 aa).

Positions 1-27 (MRRNKTTYSLLQTILVACLLTVTPTFA) are cleaved as a signal peptide. A glycan (N-linked (GlcNAc...) asparagine) is linked at Asn4. Residues 28-555 (SNKPTTDESG…IDQTLLTLLT (528 aa)) are Extracellular-facing. In terms of domain architecture, SUEL-type lectin spans 43-134 (ICDGEAAELS…KYLEVKYNCV (92 aa)). Residues 359–542 (ESNVIVQPAI…AVLMDVRGHD (184 aa)) form the GAIN-B domain. N-linked (GlcNAc...) asparagine glycans are attached at residues Asn473 and Asn518. Cystine bridges form between Cys497–Cys524 and Cys512–Cys526. Residues 497 to 542 (CVWWNHHELKWKPSGCKLSYHNKTMTSCDCTHLTHFAVLMDVRGHD) are GPS. A helical membrane pass occupies residues 556–576 (YVGCIISIICLLLTFFAYLIF). Over 577 to 584 (SRNGGDRV) the chain is Cytoplasmic. A helical membrane pass occupies residues 585-605 (FIHENLCLSLAIAEITFLAGI). Residues 606–613 (TRTEDSLQ) are Extracellular-facing. A helical membrane pass occupies residues 614–634 (CGIIAVALMYMFLSALTWMLL). Topologically, residues 635-653 (EGYHIHRMLTEVFPSDPRR) are cytoplasmic. Residues 654–674 (FTYLLVGYIPPAIITLVAYLY) form a helical membrane-spanning segment. Residues 675-692 (NSDGFGTPDHCWLSTQNN) are Extracellular-facing. A helical membrane pass occupies residues 693–713 (FIWFFAGPACFIFCANSLVLV). At 714-745 (KTLCTVYQHTSGGYLPCRHDVDSGRSIRNWVK) the chain is on the cytoplasmic side. The helical transmembrane segment at 746 to 766 (GSLALASLLGVTWIFGLFWVE) threads the bilayer. The Extracellular segment spans residues 767-770 (DSRS). Residues 771 to 791 (IVMAYVFTISNSLQGLFIFLF) form a helical membrane-spanning segment. Over 792 to 1014 (HVVFAEKMRK…NKPSMYCQDL (223 aa)) the chain is Cytoplasmic. Disordered regions lie at residues 814-833 (GSSN…DLMS) and 932-994 (YQGW…EVTP). Over residues 941–952 (PEFSPPPPPLST) the composition is skewed to pro residues. Residues 965–986 (SGRRPPSSKMSDDSAYSDGSSS) show a composition bias toward low complexity.

The protein belongs to the G-protein coupled receptor 2 family. LN-TM7 subfamily. As to quaternary structure, monomer and homodimer. Post-translationally, autoproteolytically processed at the GPS region of the GAIN-B domain; this cleavage modulates receptor activity. Expressed in epidermal precursor cells and pharyngeal primordium. In adults expression is seen in pharyngeal muscle cells and nervous system, the nerve ring, the gonad, and the vulva.

The protein resides in the cell membrane. In terms of biological role, has a role in the establishment of anterior-posterior polarity in tissues during embryogenesis. Required for the alignment of the mitotic spindles and division planes. May have a role in cell death events. Required for normal defection and oocyte fertilization. Involved in sperm function. Operates in pharyngeal pumping during feeding. The protein is Latrophilin-like protein 1 of Caenorhabditis elegans.